We begin with the raw amino-acid sequence, 128 residues long: Sulfurtransferase TusD (128 aa).

Residue Cys-78 is the Cysteine persulfide intermediate of the active site.

It belongs to the DsrE/TusD family. Heterohexamer, formed by a dimer of trimers. The hexameric TusBCD complex contains 2 copies each of TusB, TusC and TusD. The TusBCD complex interacts with TusE.

It localises to the cytoplasm. In terms of biological role, part of a sulfur-relay system required for 2-thiolation of 5-methylaminomethyl-2-thiouridine (mnm(5)s(2)U) at tRNA wobble positions. Accepts sulfur from TusA and transfers it in turn to TusE. This is Sulfurtransferase TusD from Salmonella typhi.